We begin with the raw amino-acid sequence, 694 residues long: Methionine--tRNA ligase (694 aa).

A 'HIGH' region motif is present at residues 12–22 (PYANGPLHLGH). Zn(2+) is bound by residues Cys-143, Cys-146, Cys-156, and Cys-159. The 'KMSKS' region motif lies at 330-334 (KMSKS). ATP is bound at residue Lys-333. The segment covering 550–573 (MAAPAAPATTTKPAPSKADAKPAA) has biased composition (low complexity). The disordered stretch occupies residues 550–582 (MAAPAAPATTTKPAPSKADAKPAAVANPESQTT). Positions 591-694 (DFAKLDLRIG…SGAQPGMPVR (104 aa)) constitute a tRNA-binding domain.

Belongs to the class-I aminoacyl-tRNA synthetase family. MetG type 1 subfamily. Homodimer. Zn(2+) is required as a cofactor.

The protein resides in the cytoplasm. It carries out the reaction tRNA(Met) + L-methionine + ATP = L-methionyl-tRNA(Met) + AMP + diphosphate. In terms of biological role, is required not only for elongation of protein synthesis but also for the initiation of all mRNA translation through initiator tRNA(fMet) aminoacylation. The chain is Methionine--tRNA ligase from Xanthomonas euvesicatoria pv. vesicatoria (strain 85-10) (Xanthomonas campestris pv. vesicatoria).